We begin with the raw amino-acid sequence, 686 residues long: Tripartite terminase subunit 3 (686 aa).

A Walker A motif motif is present at residues 220–227 (IPRRHGKT). Positions 315-320 (LLFVDE) match the Walker B motif motif. The For ATPase activity role is filled by Glu-320. Residues Asp-474, Glu-546, and Asp-658 each act as for nuclease activity in the active site.

The protein belongs to the herpesviridae TRM3 protein family. As to quaternary structure, interacts with the terminase subunits TRM1 and TRM2. Interacts with portal protein.

Its subcellular location is the host nucleus. Its function is as follows. Component of the molecular motor that translocates viral genomic DNA in empty capsid during DNA packaging. Forms a tripartite terminase complex together with TRM1 and TRM2 in the host cytoplasm. Once the complex reaches the host nucleus, it interacts with the capsid portal vertex. This portal forms a ring in which genomic DNA is translocated into the capsid. TRM3 carries an RNase H-like nuclease activity that plays an important role for the cleavage of concatemeric viral DNA into unit length genomes. The sequence is that of Tripartite terminase subunit 3 from Alcelaphine herpesvirus 1 (strain C500) (AlHV-1).